We begin with the raw amino-acid sequence, 225 residues long: UPF0758 protein BCE33L4198 (225 aa).

In terms of domain architecture, MPN spans 103–225 (SIRNPEDCAR…FVSLKEKGHI (123 aa)). The Zn(2+) site is built by H174, H176, and D187. The short motif at 174–187 (HNHPSGDPAPSRED) is the JAMM motif element.

The protein belongs to the UPF0758 family.

The protein is UPF0758 protein BCE33L4198 of Bacillus cereus (strain ZK / E33L).